Here is a 316-residue protein sequence, read N- to C-terminus: Ribosomal RNA small subunit methyltransferase H (316 aa).

Residues 35–37 (AGH), Asp55, Phe84, Asp105, and Gln112 each bind S-adenosyl-L-methionine.

It belongs to the methyltransferase superfamily. RsmH family.

The protein resides in the cytoplasm. The catalysed reaction is cytidine(1402) in 16S rRNA + S-adenosyl-L-methionine = N(4)-methylcytidine(1402) in 16S rRNA + S-adenosyl-L-homocysteine + H(+). Specifically methylates the N4 position of cytidine in position 1402 (C1402) of 16S rRNA. This is Ribosomal RNA small subunit methyltransferase H from Streptococcus sanguinis (strain SK36).